The sequence spans 1187 residues: Probable histidine kinase 5 (1187 aa).

The Extracellular portion of the chain corresponds to 1-175; that stretch reads MSRVGECGGG…QNNALSFNHG (175 aa). A helical membrane pass occupies residues 176 to 196; that stretch reads MIFSLSASLGIVVILVVITIF. Residues 197 to 226 are Cytoplasmic-facing; it reads KRGKQANELCQHEKLLQTPSVKISRKWSKR. The chain crosses the membrane as a helical span at residues 227–247; the sequence is ALLLGVLVGLCSSVWIFSSMH. The Extracellular portion of the chain corresponds to 248 to 531; the sequence is ADVVARRIEN…FKHAPSLPWS (284 aa). One can recognise a CHASE domain in the interval 295–519; the sequence is NPSAIDQKTF…GDPTRKHVMH (225 aa). The chain crosses the membrane as a helical span at residues 532 to 552; it reads AIMISSAVAIIVLLVGYIIYA. The Cytoplasmic portion of the chain corresponds to 553–1187; that stretch reads TLNSLEEAED…LEADATDPLT (635 aa). One can recognise a Histidine kinase domain in the interval 587-862; it reads TVSHEIRTPM…TFSFTAIFKE (276 aa). His-590 carries the phosphohistidine; by autocatalysis modification. Response regulatory domains follow at residues 886–1017 and 1041–1178; these read RALV…SKAL and NILV…AHFL. 4-aspartylphosphate occurs at positions 942 and 1091.

In terms of processing, activation probably requires a transfer of a phosphate group between a His in the transmitter domain and an Asp of the receiver domain. In terms of tissue distribution, highly expressed in young leaves and at lower levels in roots, mature leaves, stems and spikelets.

Its subcellular location is the cell membrane. It carries out the reaction ATP + protein L-histidine = ADP + protein N-phospho-L-histidine.. Its function is as follows. Cytokinin receptor related to bacterial two-component regulators. Functions as a histidine kinase and transmits the stress signal to a downstream MAPK cascade. The polypeptide is Probable histidine kinase 5 (Oryza sativa subsp. japonica (Rice)).